A 393-amino-acid chain; its full sequence is uncharacterized protein (393 aa).

Transmembrane regions (helical) follow at residues 15–35 (IVAF…VTIF), 56–76 (WGWI…NVII), 86–106 (FYAS…FQIV), 131–151 (AVLI…LITW), 176–196 (LSLT…VIAF), 253–273 (LLAN…VFMI), 289–309 (LIDL…IPVA), and 349–369 (VYLP…QVIW).

The protein localises to the cell membrane. This is an uncharacterized protein from Mycoplasma genitalium (strain ATCC 33530 / DSM 19775 / NCTC 10195 / G37) (Mycoplasmoides genitalium).